A 190-amino-acid polypeptide reads, in one-letter code: UPF0200 protein MTH_434 (190 aa).

Residue Gly10–Gly17 participates in ATP binding.

It belongs to the UPF0200 family.

The polypeptide is UPF0200 protein MTH_434 (Methanothermobacter thermautotrophicus (strain ATCC 29096 / DSM 1053 / JCM 10044 / NBRC 100330 / Delta H) (Methanobacterium thermoautotrophicum)).